The sequence spans 419 residues: Carboxypeptidase A2 (419 aa).

The signal sequence occupies residues 1–18 (MAMRLILFFGALFGHIYC). Residues 19 to 114 (LETFVGDQVL…EMLFNRRRER (96 aa)) constitute a propeptide, activation peptide. In terms of domain architecture, Peptidase M14 spans 122-414 (AYHTLEEISQ…LGLKAIMEHV (293 aa)). Residues His179 and Glu182 each coordinate Zn(2+). Substrate contacts are provided by residues 179–182 (HARE), Arg237, and 254–255 (NR). The cysteines at positions 248 and 271 are disulfide-linked. Residue His306 coordinates Zn(2+). 307 to 308 (SY) is a binding site for substrate. A disulfide bridge connects residues Cys320 and Cys354. Tyr358 contacts substrate. Glu380 (proton donor/acceptor) is an active-site residue.

It belongs to the peptidase M14 family. Requires Zn(2+) as cofactor.

The protein resides in the secreted. It carries out the reaction Similar to that of carboxypeptidase A (EC 3.4.17.1), but with a preference for bulkier C-terminal residues.. Functionally, carboxypeptidase that catalyzes the release of a C-terminal amino acid, with a preference for large aromatic C-terminal residues. The sequence is that of Carboxypeptidase A2 (CPA2) from Homo sapiens (Human).